A 266-amino-acid chain; its full sequence is GFP-like fluorescent chromoprotein cFP484 (266 aa).

Residues 104 to 106 (QYG) constitute a cross-link (2-iminomethyl-5-imidazolinone (Gln-Gly)). Tyrosine 105 carries the post-translational modification 2,3-didehydrotyrosine.

The protein belongs to the GFP family. Contains a chromophore consisting of modified amino acid residues. The chromophore is formed by autocatalytic backbone condensation between Xaa-N and Gly-(N+2), oxidation of Tyr-(N+1) to didehydrotyrosine, and formation of a double bond to the alpha-amino nitrogen of residue Xaa-N. Maturation of the chromophore requires nothing other than molecular oxygen. The precise stereochemistry of the tyrosine has not been determined. As to expression, tentacle and oral disk.

Pigment protein that is green in color. This chain is GFP-like fluorescent chromoprotein cFP484, found in Clavularia sp. (Brown star polyp).